The primary structure comprises 180 residues: Putative manganese efflux pump MntP (180 aa).

6 consecutive transmembrane segments (helical) span residues 1-21 (MLSVILLAIALAMDAFSISIT), 34-54 (ILWYGIFFGGFQCFMPIIGYV), 63-83 (ISTYAPWIAFILLLCIGLNMI), 103-123 (VTLLAIATSIDAFAVGVTFAI), 129-149 (VIPCAIIGIITFLFSIVGIFI), and 160-180 (KFQILGGVILILLGFKILLGF).

This sequence belongs to the MntP (TC 9.B.29) family.

It is found in the cell membrane. In terms of biological role, probably functions as a manganese efflux pump. This Methanosphaera stadtmanae (strain ATCC 43021 / DSM 3091 / JCM 11832 / MCB-3) protein is Putative manganese efflux pump MntP.